The chain runs to 216 residues: Large ribosomal subunit protein uL3 (216 aa).

The tract at residues 137–158 is disordered; the sequence is GASHGAHKNHRKPGSIGGASTP.

It belongs to the universal ribosomal protein uL3 family. As to quaternary structure, part of the 50S ribosomal subunit. Forms a cluster with proteins L14 and L19.

One of the primary rRNA binding proteins, it binds directly near the 3'-end of the 23S rRNA, where it nucleates assembly of the 50S subunit. This chain is Large ribosomal subunit protein uL3, found in Arthrobacter sp. (strain FB24).